A 261-amino-acid chain; its full sequence is Hemin import ATP-binding protein HmuV (261 aa).

The 237-residue stretch at Leu-5–Asp-241 folds into the ABC transporter domain. Gly-37–Ser-44 is an ATP binding site.

This sequence belongs to the ABC transporter superfamily. Heme (hemin) importer (TC 3.A.1.14.5) family. In terms of assembly, the complex is composed of two ATP-binding proteins (HmuV), two transmembrane proteins (HmuU) and a solute-binding protein (HmuT).

It localises to the cell inner membrane. In terms of biological role, part of the ABC transporter complex HmuTUV involved in hemin import. Responsible for energy coupling to the transport system. This is Hemin import ATP-binding protein HmuV from Rhodopseudomonas palustris (strain BisB5).